The primary structure comprises 220 residues: Meiotic nuclear division protein 1 homolog (220 aa).

A coiled-coil region spans residues 76-147 (SKALHARKRR…KVEIEKYQEC (72 aa)).

It belongs to the MND1 family.

The protein resides in the nucleus. In terms of biological role, required for proper homologous chromosome pairing and efficient cross-over and intragenic recombination during meiosis. Stimulates both DMC1- and RAD51-mediated homologous strand assimilation, which is required for the resolution of meiotic double-strand breaks. This Danio rerio (Zebrafish) protein is Meiotic nuclear division protein 1 homolog.